A 688-amino-acid polypeptide reads, in one-letter code: UvrABC system protein C (688 aa).

A GIY-YIG domain is found at 11–90 (LTPGVYLYKD…IKKHRPRYNI (80 aa)). Residues 200–235 (GELVDALRTEMEAASQGLDFERAAVLRDRIRALERT) form the UVR domain.

The protein belongs to the UvrC family. As to quaternary structure, interacts with UvrB in an incision complex.

The protein localises to the cytoplasm. The UvrABC repair system catalyzes the recognition and processing of DNA lesions. UvrC both incises the 5' and 3' sides of the lesion. The N-terminal half is responsible for the 3' incision and the C-terminal half is responsible for the 5' incision. In Nitratidesulfovibrio vulgaris (strain ATCC 29579 / DSM 644 / CCUG 34227 / NCIMB 8303 / VKM B-1760 / Hildenborough) (Desulfovibrio vulgaris), this protein is UvrABC system protein C.